The following is a 96-amino-acid chain: Aspartyl/glutamyl-tRNA(Asn/Gln) amidotransferase subunit C (96 aa).

It belongs to the GatC family. Heterotrimer of A, B and C subunits.

The catalysed reaction is L-glutamyl-tRNA(Gln) + L-glutamine + ATP + H2O = L-glutaminyl-tRNA(Gln) + L-glutamate + ADP + phosphate + H(+). It catalyses the reaction L-aspartyl-tRNA(Asn) + L-glutamine + ATP + H2O = L-asparaginyl-tRNA(Asn) + L-glutamate + ADP + phosphate + 2 H(+). Functionally, allows the formation of correctly charged Asn-tRNA(Asn) or Gln-tRNA(Gln) through the transamidation of misacylated Asp-tRNA(Asn) or Glu-tRNA(Gln) in organisms which lack either or both of asparaginyl-tRNA or glutaminyl-tRNA synthetases. The reaction takes place in the presence of glutamine and ATP through an activated phospho-Asp-tRNA(Asn) or phospho-Glu-tRNA(Gln). The protein is Aspartyl/glutamyl-tRNA(Asn/Gln) amidotransferase subunit C of Bacillus anthracis (strain A0248).